The following is a 712-amino-acid chain: Polyribonucleotide nucleotidyltransferase (712 aa).

Mg(2+) contacts are provided by aspartate 487 and aspartate 493. The KH domain occupies proline 554 to isoleucine 613. The S1 motif domain maps to glycine 623 to lysine 691.

Belongs to the polyribonucleotide nucleotidyltransferase family. Mg(2+) serves as cofactor.

It is found in the cytoplasm. The catalysed reaction is RNA(n+1) + phosphate = RNA(n) + a ribonucleoside 5'-diphosphate. Involved in mRNA degradation. Catalyzes the phosphorolysis of single-stranded polyribonucleotides processively in the 3'- to 5'-direction. The sequence is that of Polyribonucleotide nucleotidyltransferase from Bacillus cereus (strain AH820).